The following is a 431-amino-acid chain: Glutamate-1-semialdehyde 2,1-aminomutase (431 aa).

Residue Lys-265 is modified to N6-(pyridoxal phosphate)lysine.

Belongs to the class-III pyridoxal-phosphate-dependent aminotransferase family. HemL subfamily. In terms of assembly, homodimer. The cofactor is pyridoxal 5'-phosphate.

It is found in the cytoplasm. The catalysed reaction is (S)-4-amino-5-oxopentanoate = 5-aminolevulinate. Its pathway is porphyrin-containing compound metabolism; protoporphyrin-IX biosynthesis; 5-aminolevulinate from L-glutamyl-tRNA(Glu): step 2/2. This Vibrio campbellii (strain ATCC BAA-1116) protein is Glutamate-1-semialdehyde 2,1-aminomutase.